Here is a 142-residue protein sequence, read N- to C-terminus: Hemoglobin subunit alpha (142 aa).

The 141-residue stretch at 2 to 142 folds into the Globin domain; it reads VLSPADKTNV…VSTVLTSKYR (141 aa). Position 4 is a phosphoserine (S4). K8 carries the post-translational modification N6-succinyllysine. T9 is modified (phosphothreonine). The residue at position 12 (K12) is an N6-succinyllysine. The residue at position 17 (K17) is an N6-acetyllysine; alternate. Position 17 is an N6-succinyllysine; alternate (K17). Y25 is subject to Phosphotyrosine. S36 bears the Phosphoserine mark. At K41 the chain carries N6-succinyllysine. Position 50 is a phosphoserine (S50). H59 serves as a coordination point for O2. Residue H88 participates in heme b binding. At S103 the chain carries Phosphoserine. Residue T109 is modified to Phosphothreonine. Phosphoserine is present on residues S125 and S132. Phosphothreonine is present on residues T135 and T138. A Phosphoserine modification is found at S139.

The protein belongs to the globin family. As to quaternary structure, heterotetramer of two alpha chains and two beta chains in adult hemoglobin A (HbA); two alpha chains and two delta chains in adult hemoglobin A2 (HbA2); two alpha chains and two epsilon chains in early embryonic hemoglobin Gower-2; two alpha chains and two gamma chains in fetal hemoglobin F (HbF). As to expression, red blood cells.

Involved in oxygen transport from the lung to the various peripheral tissues. Functionally, hemopressin acts as an antagonist peptide of the cannabinoid receptor CNR1. Hemopressin-binding efficiently blocks cannabinoid receptor CNR1 and subsequent signaling. This is Hemoglobin subunit alpha (HBA1) from Pan paniscus (Pygmy chimpanzee).